The chain runs to 81 residues: Short neurotoxin SN160 (81 aa).

A signal peptide spans 1 to 21; it reads MKTLLLTLVVVTIVCLDLGYT. 4 disulfide bridges follow: Cys24–Cys43, Cys38–Cys60, Cys62–Cys73, and Cys74–Cys79.

This sequence belongs to the three-finger toxin family. Short-chain subfamily. Type I alpha-neurotoxin sub-subfamily. As to expression, expressed by the venom gland.

It is found in the secreted. In terms of biological role, binds to muscle nicotinic acetylcholine receptor (nAChR) and inhibit acetylcholine from binding to the receptor, thereby impairing neuromuscular transmission. The sequence is that of Short neurotoxin SN160 from Hydrophis hardwickii (Hardwick's spine-bellied seasnake).